The primary structure comprises 338 residues: Ketol-acid reductoisomerase (NADP(+)) (338 aa).

The KARI N-terminal Rossmann domain occupies 1–181; sequence MKVFYDKDCD…GGGRTGIIET (181 aa). Residues 24-27, Arg47, Ser50, Thr52, and 82-85 contribute to the NADP(+) site; these read YGSQ and DEFQ. His107 is an active-site residue. Gly133 contacts NADP(+). A KARI C-terminal knotted domain is found at 182-327; it reads TFKDETETDL…EQLRSMMPWI (146 aa). Positions 190, 194, 226, and 230 each coordinate Mg(2+). Residue Ser251 participates in substrate binding.

Belongs to the ketol-acid reductoisomerase family. Mg(2+) serves as cofactor.

It catalyses the reaction (2R)-2,3-dihydroxy-3-methylbutanoate + NADP(+) = (2S)-2-acetolactate + NADPH + H(+). It carries out the reaction (2R,3R)-2,3-dihydroxy-3-methylpentanoate + NADP(+) = (S)-2-ethyl-2-hydroxy-3-oxobutanoate + NADPH + H(+). It participates in amino-acid biosynthesis; L-isoleucine biosynthesis; L-isoleucine from 2-oxobutanoate: step 2/4. It functions in the pathway amino-acid biosynthesis; L-valine biosynthesis; L-valine from pyruvate: step 2/4. Its function is as follows. Involved in the biosynthesis of branched-chain amino acids (BCAA). Catalyzes an alkyl-migration followed by a ketol-acid reduction of (S)-2-acetolactate (S2AL) to yield (R)-2,3-dihydroxy-isovalerate. In the isomerase reaction, S2AL is rearranged via a Mg-dependent methyl migration to produce 3-hydroxy-3-methyl-2-ketobutyrate (HMKB). In the reductase reaction, this 2-ketoacid undergoes a metal-dependent reduction by NADPH to yield (R)-2,3-dihydroxy-isovalerate. The chain is Ketol-acid reductoisomerase (NADP(+)) from Pseudomonas putida (strain W619).